We begin with the raw amino-acid sequence, 381 residues long: Cytochrome b (381 aa).

4 consecutive transmembrane segments (helical) span residues Phe-34–Met-54, Trp-78–Ile-99, Trp-114–Leu-134, and Phe-179–Leu-199. Residues His-84 and His-98 each coordinate heme b. Heme b contacts are provided by His-183 and His-197. His-202 is a binding site for a ubiquinone. The next 4 helical transmembrane spans lie at Tyr-227–Thr-247, Leu-289–His-309, Leu-321–Gly-341, and Phe-348–Pro-368.

This sequence belongs to the cytochrome b family. In terms of assembly, the cytochrome bc1 complex contains 3 respiratory subunits (MT-CYB, CYC1 and UQCRFS1), 2 core proteins (UQCRC1 and UQCRC2) and probably 6 low-molecular weight proteins. Heme b serves as cofactor.

The protein localises to the mitochondrion inner membrane. Its function is as follows. Component of the ubiquinol-cytochrome c reductase complex (complex III or cytochrome b-c1 complex) that is part of the mitochondrial respiratory chain. The b-c1 complex mediates electron transfer from ubiquinol to cytochrome c. Contributes to the generation of a proton gradient across the mitochondrial membrane that is then used for ATP synthesis. This Negaprion brevirostris (Lemon shark) protein is Cytochrome b (mt-cyb).